The primary structure comprises 183 residues: MTATAQQLEYLKNSIKSIQDYPKPGILFRDVTSLLEDPKAYALSIDLLVERYKNAGITKVVGTEARGFLFGAPVALGLGVGFVPVRKPGKLPRETISENYDLEYGTDQLEIHVDAIKPGDKVLVVDDLLATGGTIEATVKLIRRLGGEVADAAFIINLFDLGGEQRLEKQGITSYSLVPFPGH.

The protein belongs to the purine/pyrimidine phosphoribosyltransferase family. In terms of assembly, homodimer.

Its subcellular location is the cytoplasm. The enzyme catalyses AMP + diphosphate = 5-phospho-alpha-D-ribose 1-diphosphate + adenine. The protein operates within purine metabolism; AMP biosynthesis via salvage pathway; AMP from adenine: step 1/1. In terms of biological role, catalyzes a salvage reaction resulting in the formation of AMP, that is energically less costly than de novo synthesis. This chain is Adenine phosphoribosyltransferase, found in Shigella flexneri serotype 5b (strain 8401).